We begin with the raw amino-acid sequence, 540 residues long: ADP,ATP carrier protein 2 (540 aa).

The next 11 membrane-spanning stretches (helical) occupy residues 24–44, 62–82, 94–114, 151–171, 223–243, 295–315, 337–357, 367–387, 391–411, 458–478, and 480–500; these read FSKFVPLFLLAFFVGFNYCLL, VIPFLKVWGIVPGAVIVTMVY, VFYCFMAAFLGFFFLFAVIIY, IYYVMSELWSSVVLSMLFWGL, SVMLNLTMLITCSGLIMIWLY, LLGLAIIVLSYNLVIHLFEVV, ITTLIGVVSVLAAVLLTGQCI, LVTPLVMLVSGLLFFGTIFAA, ISIFGGVLGMTPLALAAWTGG, SGGSLIYQGLLVIFSSVAASL, and VIALVLLIIMVVWIAVVAYIG.

This sequence belongs to the ADP/ATP translocase tlc family.

Its subcellular location is the cell membrane. This Chlamydia pneumoniae (Chlamydophila pneumoniae) protein is ADP,ATP carrier protein 2 (tlcB).